Here is a 215-residue protein sequence, read N- to C-terminus: Ependymin-1 (215 aa).

An N-terminal signal peptide occupies residues 1 to 20; the sequence is MHTVKLLCVVFSCLCAVAWA. 2 N-linked (GlcNAc...) asparagine glycosylation sites follow: asparagine 71 and asparagine 94.

The protein belongs to the ependymin family. As to quaternary structure, forms disulfide-linked dimers. Different glycosylation variants are known as EPD-beta and EPD-gamma. In terms of processing, binds calcium through the terminal sialic acids. In terms of tissue distribution, EPDs are synthesized in the meninx and secreted in the cerebrospinal fluid.

It is found in the secreted. In terms of biological role, may play a role in neural plasticity. May be involved during axon regeneration. The chain is Ependymin-1 (epd1) from Carassius auratus (Goldfish).